The following is a 488-amino-acid chain: Acetyl-coenzyme A carboxylase carboxyl transferase subunit beta, chloroplastic (488 aa).

Positions 227–488 (LWIQCDNCYG…LHAFFPLNTN (262 aa)) constitute a CoA carboxyltransferase N-terminal domain. Zn(2+) contacts are provided by C231, C234, C247, and C250. The segment at 231–250 (CDNCYGLMYKKVKMNVCEQC) adopts a C4-type zinc-finger fold.

It belongs to the AccD/PCCB family. As to quaternary structure, acetyl-CoA carboxylase is a heterohexamer composed of biotin carboxyl carrier protein, biotin carboxylase and 2 subunits each of ACCase subunit alpha and ACCase plastid-coded subunit beta (accD). It depends on Zn(2+) as a cofactor. As to expression, accumulates in fatty acids synthesizing tissues such as embryos, expanding leaves, flower buds, flowers, and developing siliques.

Its subcellular location is the plastid. The protein localises to the chloroplast membrane. The protein resides in the chloroplast stroma. It carries out the reaction N(6)-carboxybiotinyl-L-lysyl-[protein] + acetyl-CoA = N(6)-biotinyl-L-lysyl-[protein] + malonyl-CoA. It participates in lipid metabolism; malonyl-CoA biosynthesis; malonyl-CoA from acetyl-CoA: step 1/1. Its function is as follows. Component of the acetyl coenzyme A carboxylase (ACC) complex. Biotin carboxylase (BC) catalyzes the carboxylation of biotin on its carrier protein (BCCP) and then the CO(2) group is transferred by the transcarboxylase to acetyl-CoA to form malonyl-CoA. The polypeptide is Acetyl-coenzyme A carboxylase carboxyl transferase subunit beta, chloroplastic (Arabidopsis thaliana (Mouse-ear cress)).